The chain runs to 689 residues: DNA ligase (689 aa).

NAD(+) is bound by residues 40–44, 89–90, and glutamate 122; these read DQEYD and SL. Lysine 124 functions as the N6-AMP-lysine intermediate in the catalytic mechanism. 4 residues coordinate NAD(+): arginine 145, glutamate 182, lysine 300, and lysine 325. 4 residues coordinate Zn(2+): cysteine 419, cysteine 422, cysteine 437, and cysteine 442. The BRCT domain maps to 600-689; sequence QADGVLTGAT…SADASADASA (90 aa).

It belongs to the NAD-dependent DNA ligase family. LigA subfamily. Mg(2+) serves as cofactor. Requires Mn(2+) as cofactor.

It carries out the reaction NAD(+) + (deoxyribonucleotide)n-3'-hydroxyl + 5'-phospho-(deoxyribonucleotide)m = (deoxyribonucleotide)n+m + AMP + beta-nicotinamide D-nucleotide.. In terms of biological role, DNA ligase that catalyzes the formation of phosphodiester linkages between 5'-phosphoryl and 3'-hydroxyl groups in double-stranded DNA using NAD as a coenzyme and as the energy source for the reaction. It is essential for DNA replication and repair of damaged DNA. The protein is DNA ligase of Gemmatimonas aurantiaca (strain DSM 14586 / JCM 11422 / NBRC 100505 / T-27).